The primary structure comprises 379 residues: Queuine tRNA-ribosyltransferase (379 aa).

Asp-94 functions as the Proton acceptor in the catalytic mechanism. Substrate is bound by residues 94 to 98 (DSGGF), Asp-148, Gln-191, and Gly-218. The RNA binding stretch occupies residues 249 to 255 (GVGSPDS). Asp-268 acts as the Nucleophile in catalysis. Positions 273 to 277 (TRIAR) are RNA binding; important for wobble base 34 recognition. Zn(2+)-binding residues include Cys-306, Cys-308, Cys-311, and His-337.

This sequence belongs to the queuine tRNA-ribosyltransferase family. In terms of assembly, homodimer. Within each dimer, one monomer is responsible for RNA recognition and catalysis, while the other monomer binds to the replacement base PreQ1. The cofactor is Zn(2+).

The enzyme catalyses 7-aminomethyl-7-carbaguanine + guanosine(34) in tRNA = 7-aminomethyl-7-carbaguanosine(34) in tRNA + guanine. The protein operates within tRNA modification; tRNA-queuosine biosynthesis. Its function is as follows. Catalyzes the base-exchange of a guanine (G) residue with the queuine precursor 7-aminomethyl-7-deazaguanine (PreQ1) at position 34 (anticodon wobble position) in tRNAs with GU(N) anticodons (tRNA-Asp, -Asn, -His and -Tyr). Catalysis occurs through a double-displacement mechanism. The nucleophile active site attacks the C1' of nucleotide 34 to detach the guanine base from the RNA, forming a covalent enzyme-RNA intermediate. The proton acceptor active site deprotonates the incoming PreQ1, allowing a nucleophilic attack on the C1' of the ribose to form the product. After dissociation, two additional enzymatic reactions on the tRNA convert PreQ1 to queuine (Q), resulting in the hypermodified nucleoside queuosine (7-(((4,5-cis-dihydroxy-2-cyclopenten-1-yl)amino)methyl)-7-deazaguanosine). This is Queuine tRNA-ribosyltransferase from Bacillus cereus (strain G9842).